A 372-amino-acid polypeptide reads, in one-letter code: Glutamate 5-kinase (372 aa).

Position 14 (Lys14) interacts with ATP. Positions 54, 141, and 153 each coordinate substrate. Position 173-174 (173-174 (TD)) interacts with ATP. A PUA domain is found at 280–358 (RGTLVLDDGA…EAIVRELGYM (79 aa)).

This sequence belongs to the glutamate 5-kinase family.

The protein localises to the cytoplasm. The enzyme catalyses L-glutamate + ATP = L-glutamyl 5-phosphate + ADP. It participates in amino-acid biosynthesis; L-proline biosynthesis; L-glutamate 5-semialdehyde from L-glutamate: step 1/2. In terms of biological role, catalyzes the transfer of a phosphate group to glutamate to form L-glutamate 5-phosphate. The chain is Glutamate 5-kinase from Pseudomonas syringae pv. tomato (strain ATCC BAA-871 / DC3000).